A 414-amino-acid polypeptide reads, in one-letter code: WD repeat-containing protein jip5 (414 aa).

5 WD repeats span residues 9–48, 73–112, 118–159, 222–263, and 319–356; these read PLSA…SSDD, RHKG…VENK, AKDG…SNVS, VSSV…DQDE, and DETE…NDMD. Residues 39-65 are disordered; it reads RLPSEESSDDDDGTASNSSARNGKGHI. Residues 357 to 414 are disordered; sequence VDMAGGKRMFGGDSDDSDDDNDSEDSEQEQRQPVEPQRKRKKNKGKGKRDIIAFADID. Positions 369 to 383 are enriched in acidic residues; it reads DSDDSDDDNDSEDSE. The span at 394–403 shows a compositional bias: basic residues; sequence RKRKKNKGKG.

The protein belongs to the WD repeat WDR55 family.

It is found in the nucleus. The protein resides in the nucleolus. The chain is WD repeat-containing protein jip5 (jip5) from Aspergillus clavatus (strain ATCC 1007 / CBS 513.65 / DSM 816 / NCTC 3887 / NRRL 1 / QM 1276 / 107).